The following is a 422-amino-acid chain: 26S proteasome non-ATPase regulatory subunit 11B (422 aa).

The region spanning 228 to 392 (AYSYFFEAFE…DVLIIFEEPP (165 aa)) is the PCI domain.

Belongs to the proteasome subunit S9 family. Component of the lid subcomplex of the 19S proteasome regulatory particle complex (also named PA700 complex). The 26S proteasome consists of a 20S proteasome core and two 19S regulatory subunits.

The protein localises to the nucleus. It localises to the cytoplasm. Its subcellular location is the cytosol. Its function is as follows. Component of the lid subcomplex of the 26S proteasome, a multiprotein complex involved in the ATP-dependent degradation of ubiquitinated proteins. In the complex, psmd11b is required for proteasome assembly. The chain is 26S proteasome non-ATPase regulatory subunit 11B (psmd11b) from Danio rerio (Zebrafish).